Here is a 564-residue protein sequence, read N- to C-terminus: ATP-dependent RNA helicase DBP3 (564 aa).

The tract at residues 31–125 is disordered; sequence TKQQTMSKDK…TNYTQSSKLS (95 aa). Residues 58–73 show a composition bias toward basic and acidic residues; the sequence is ADSKKQRKLEKQEKKD. The span at 74-96 shows a compositional bias: basic residues; the sequence is KKDKKDKKEKKEKKEKKHKKEKK. Residues 112 to 125 are compositionally biased toward low complexity; that stretch reads SSSSTNYTQSSKLS. The Q motif motif lies at 155-181; it reads LSFDQVQLTSAITSKLSKFDKPTPIQS. The 173-residue stretch at 184–356 folds into the Helicase ATP-binding domain; sequence WPFLLSGKDV…NNFMNSPVKV (173 aa). 197 to 204 is an ATP binding site; it reads AETGSGKT. The DEAD box motif lies at 303–306; the sequence is DEAD. The region spanning 385-534 is the Helicase C-terminal domain; it reads KLIQLLRKYN…PVPEELLKFG (150 aa).

Belongs to the DEAD box helicase family. DDX5/DBP2 subfamily.

The protein localises to the nucleus. It is found in the nucleolus. It catalyses the reaction ATP + H2O = ADP + phosphate + H(+). In terms of biological role, ATP-dependent RNA helicase required for 60S ribosomal subunit synthesis. Involved in efficient pre-rRNA processing, predominantly at site A3, which is necessary for the normal formation of 25S and 5.8S rRNAs. The protein is ATP-dependent RNA helicase DBP3 (DBP3) of Candida albicans (strain SC5314 / ATCC MYA-2876) (Yeast).